The sequence spans 244 residues: Large ribosomal subunit protein uL3 (244 aa).

Residues 215-244 are disordered; it reads KKPPRERRGFAGSSTVDPLKASKRAVAKKK. A compositionally biased stretch (basic residues) spans 235–244; that stretch reads ASKRAVAKKK.

The protein belongs to the universal ribosomal protein uL3 family. Part of the 50S ribosomal subunit. Forms a cluster with proteins L14 and L19.

Its function is as follows. One of the primary rRNA binding proteins, it binds directly near the 3'-end of the 23S rRNA, where it nucleates assembly of the 50S subunit. This Koribacter versatilis (strain Ellin345) protein is Large ribosomal subunit protein uL3.